A 1285-amino-acid chain; its full sequence is Peroxisomal ATPase PEX1 (1285 aa).

A compositionally biased stretch (polar residues) spans Gln344–Met353. The segment at Gln344–Asp373 is disordered. Ser354 is subject to Phosphoserine. Positions Pro355–Asp373 are enriched in basic and acidic residues. ATP is bound by residues Gly601 to Ser608 and Gly883 to Thr890. Over residues Asn1142 to Gln1161 the composition is skewed to polar residues. Residues Asn1142–Asp1162 are disordered. Phosphoserine occurs at positions 1183, 1211, and 1213. The interval Phe1262–Ala1285 is disordered.

This sequence belongs to the AAA ATPase family. As to quaternary structure, homooligomer; homooligomerizes in the cytosol, interaction with PEX6 promotes dissociation of the homooligomer. Interacts with PEX6; forming the PEX1-PEX6 AAA ATPase complex, which is composed of a heterohexamer formed by a trimer of PEX1-PEX6 dimers. Interacts indirectly with PEX26, via its interaction with PEX6.

The protein resides in the cytoplasm. It localises to the cytosol. The protein localises to the peroxisome membrane. It catalyses the reaction ATP + H2O = ADP + phosphate + H(+). Component of the PEX1-PEX6 AAA ATPase complex, a protein dislocase complex that mediates the ATP-dependent extraction of the PEX5 receptor from peroxisomal membranes, an essential step for PEX5 recycling. Specifically recognizes PEX5 monoubiquitinated at 'Cys-11', and pulls it out of the peroxisome lumen through the PEX2-PEX10-PEX12 retrotranslocation channel. Extraction by the PEX1-PEX6 AAA ATPase complex is accompanied by unfolding of the TPR repeats and release of bound cargo from PEX5. The chain is Peroxisomal ATPase PEX1 from Cricetulus griseus (Chinese hamster).